We begin with the raw amino-acid sequence, 579 residues long: Nuclear hormone receptor family member nhr-47 (579 aa).

The segment at residues 8–83 is a DNA-binding region (nuclear receptor); it reads GTLCAVCDDI…VGMDKNSIQN (76 aa). NR C4-type zinc fingers lie at residues 11-31 and 47-71; these read CAVC…CNGC and CQGN…LQKC. The disordered stretch occupies residues 87-128; the sequence is RIGYTKRKRRHDDNDMEGGVHHSEHIRDGSSGSPQMNDESPE. Residues 104–114 show a composition bias toward basic and acidic residues; sequence GGVHHSEHIRD. The NR LBD domain occupies 164–553; that stretch reads ADLHSYATLE…SLVKETSLGP (390 aa).

The protein belongs to the nuclear hormone receptor family.

It is found in the nucleus. Its function is as follows. Orphan nuclear receptor. This is Nuclear hormone receptor family member nhr-47 (nhr-47) from Caenorhabditis elegans.